The following is a 198-amino-acid chain: uncharacterized protein (198 aa).

The disordered stretch occupies residues 1 to 23 (MYFGKTRQSDQSGRVPPNQNVTT). Residues 9 to 23 (SDQSGRVPPNQNVTT) are compositionally biased toward polar residues. The Mo-molybdopterin site is built by Cys75, His144, and Arg149.

Requires Mo-molybdopterin as cofactor.

This is an uncharacterized protein from Bacillus subtilis (strain 168).